The following is a 363-amino-acid chain: Putative agmatine deiminase 1 (363 aa).

Residue Cys-356 is the Amidino-cysteine intermediate of the active site.

It belongs to the agmatine deiminase family.

It carries out the reaction agmatine + H2O = N-carbamoylputrescine + NH4(+). In Listeria monocytogenes serovar 1/2a (strain ATCC BAA-679 / EGD-e), this protein is Putative agmatine deiminase 1.